A 202-amino-acid chain; its full sequence is Glycerol-3-phosphate acyltransferase (202 aa).

A run of 6 helical transmembrane segments spans residues 3 to 23, 61 to 81, 87 to 107, 118 to 138, 144 to 164, and 167 to 187; these read NLII…LILA, IATI…LKFL, LLWS…YLLF, GAMI…WVVI, ISSL…FIFN, and LEIH…YKHL.

This sequence belongs to the PlsY family. Probably interacts with PlsX.

The protein resides in the cell inner membrane. It catalyses the reaction an acyl phosphate + sn-glycerol 3-phosphate = a 1-acyl-sn-glycero-3-phosphate + phosphate. Its pathway is lipid metabolism; phospholipid metabolism. Catalyzes the transfer of an acyl group from acyl-phosphate (acyl-PO(4)) to glycerol-3-phosphate (G3P) to form lysophosphatidic acid (LPA). This enzyme utilizes acyl-phosphate as fatty acyl donor, but not acyl-CoA or acyl-ACP. The protein is Glycerol-3-phosphate acyltransferase of Campylobacter jejuni subsp. jejuni serotype O:6 (strain 81116 / NCTC 11828).